Consider the following 1101-residue polypeptide: Zinc finger SWIM domain-containing protein 4 (1101 aa).

The tract at residues 1-29 (MEPPAAKRSRGCPAGDEPGTGARRSRPEP) is disordered. An SWIM-type zinc finger spans residues 134–171 (YHVSISFDRCKITSVSCGCDNRDLFYCAHVVALSLYRI).

The protein is Zinc finger SWIM domain-containing protein 4 (Zswim4) of Mus musculus (Mouse).